Reading from the N-terminus, the 479-residue chain is Glutamyl-tRNA(Gln) amidotransferase subunit A (479 aa).

Residues Lys71 and Ser146 each act as charge relay system in the active site. Ser170 serves as the catalytic Acyl-ester intermediate.

This sequence belongs to the amidase family. GatA subfamily. Heterotrimer of A, B and C subunits.

It carries out the reaction L-glutamyl-tRNA(Gln) + L-glutamine + ATP + H2O = L-glutaminyl-tRNA(Gln) + L-glutamate + ADP + phosphate + H(+). Allows the formation of correctly charged Gln-tRNA(Gln) through the transamidation of misacylated Glu-tRNA(Gln) in organisms which lack glutaminyl-tRNA synthetase. The reaction takes place in the presence of glutamine and ATP through an activated gamma-phospho-Glu-tRNA(Gln). The chain is Glutamyl-tRNA(Gln) amidotransferase subunit A from Lactobacillus gasseri (strain ATCC 33323 / DSM 20243 / BCRC 14619 / CIP 102991 / JCM 1131 / KCTC 3163 / NCIMB 11718 / NCTC 13722 / AM63).